Reading from the N-terminus, the 238-residue chain is Ribose-5-phosphate isomerase A (238 aa).

Substrate contacts are provided by residues 30–33 (SGST), 87–90 (DGAD), and 100–103 (KGGG). Catalysis depends on Glu109, which acts as the Proton acceptor. Lys127 provides a ligand contact to substrate.

The protein belongs to the ribose 5-phosphate isomerase family. Homodimer.

It carries out the reaction aldehydo-D-ribose 5-phosphate = D-ribulose 5-phosphate. It participates in carbohydrate degradation; pentose phosphate pathway; D-ribose 5-phosphate from D-ribulose 5-phosphate (non-oxidative stage): step 1/1. In terms of biological role, catalyzes the reversible conversion of ribose-5-phosphate to ribulose 5-phosphate. In Synechococcus sp. (strain CC9311), this protein is Ribose-5-phosphate isomerase A.